The chain runs to 399 residues: Probable peptidoglycan glycosyltransferase FtsW (399 aa).

The Cytoplasmic portion of the chain corresponds to 1–25 (MTAAAPSKPLPRTPRVRQAYPLDYP). Residues 26–46 (LLLCALGLLAFGWVMVTSASM) form a helical membrane-spanning segment. The Periplasmic segment spans residues 47–64 (SIAEACCQNPFHYSIRHA). A helical membrane pass occupies residues 65 to 85 (IALGLALMLGLMAYSVPSHWW). Topologically, residues 86-88 (ERH) are cytoplasmic. A helical membrane pass occupies residues 89-109 (GVWLFLASALVLILVLIPGIG). At 110-117 (RTVNGATR) the chain is on the periplasmic side. The helical transmembrane segment at 118 to 138 (WIPLGPLNVQPSEFVKLFAIL) threads the bilayer. Over 139–153 (YVAGYLVRHADKVVN) the chain is Cytoplasmic. A helical membrane pass occupies residues 154 to 174 (QLSGFIRPLILIGAAALLILM). The Periplasmic portion of the chain corresponds to 175-177 (QPD). The next 2 helical transmembrane spans lie at 178 to 198 (FGTT…GGAS) and 199 to 219 (LLPF…LVIF). The Periplasmic segment spans residues 220–281 (SPYRLERVVS…PEAHTDFLPS (62 aa)). Residues 282–302 (VIGEELGLAGMLVLIAAFVFL) traverse the membrane as a helical segment. Residues 303 to 326 (SWRAMSIGVRAEALKRPFESYVAQ) are Cytoplasmic-facing. The helical transmembrane segment at 327–347 (GIGLWIGLQSFVNLGVNVGIL) threads the bilayer. Over 348 to 353 (PTKGLT) the chain is Periplasmic. A helical membrane pass occupies residues 354–374 (LPFMSYGSNSLMVGCMAVAIL). The Cytoplasmic portion of the chain corresponds to 375 to 399 (LRIDVMLRRVESEAKFKRGTPWSRA).

Belongs to the SEDS family. FtsW subfamily.

Its subcellular location is the cell inner membrane. It carries out the reaction [GlcNAc-(1-&gt;4)-Mur2Ac(oyl-L-Ala-gamma-D-Glu-L-Lys-D-Ala-D-Ala)](n)-di-trans,octa-cis-undecaprenyl diphosphate + beta-D-GlcNAc-(1-&gt;4)-Mur2Ac(oyl-L-Ala-gamma-D-Glu-L-Lys-D-Ala-D-Ala)-di-trans,octa-cis-undecaprenyl diphosphate = [GlcNAc-(1-&gt;4)-Mur2Ac(oyl-L-Ala-gamma-D-Glu-L-Lys-D-Ala-D-Ala)](n+1)-di-trans,octa-cis-undecaprenyl diphosphate + di-trans,octa-cis-undecaprenyl diphosphate + H(+). The protein operates within cell wall biogenesis; peptidoglycan biosynthesis. Functionally, peptidoglycan polymerase that is essential for cell division. This is Probable peptidoglycan glycosyltransferase FtsW from Allochromatium vinosum (strain ATCC 17899 / DSM 180 / NBRC 103801 / NCIMB 10441 / D) (Chromatium vinosum).